The chain runs to 170 residues: MAVLDVLIYPDENLAKVCQPVETVDAELNTFIDNMFDTMYEHEGIGLAAPQVNVLKRVITIDIEGDKTNQIVLINPEILESSGETGIEEGCLSIPGCRALVPRKEKLTVKALNREGQTFTLEADGLLAICIQHEIDHLNGVLFVDHISQLKRQRIKEKMLKLKKQIERAK.

2 residues coordinate Fe cation: cysteine 91 and histidine 133. Glutamate 134 is a catalytic residue. Position 137 (histidine 137) interacts with Fe cation.

Belongs to the polypeptide deformylase family. Requires Fe(2+) as cofactor.

The enzyme catalyses N-terminal N-formyl-L-methionyl-[peptide] + H2O = N-terminal L-methionyl-[peptide] + formate. Removes the formyl group from the N-terminal Met of newly synthesized proteins. Requires at least a dipeptide for an efficient rate of reaction. N-terminal L-methionine is a prerequisite for activity but the enzyme has broad specificity at other positions. In Glaesserella parasuis serovar 5 (strain SH0165) (Haemophilus parasuis), this protein is Peptide deformylase.